The primary structure comprises 159 residues: MIEIEVFPHRFLKATTTEKFLNSAYSLETVQRVIMHGESLPQKVNYGPAKGTPVNHSERKLINVQGVEVQLTLQVGRFWILLDDETELSKIDEICKELFQYGYKVSEGRFIKDSPTVTDYMKYGESFVNNIDKRMLGVTDPRSRFENSVSLIPKSEKGE.

As to quaternary structure, MCR is composed of three subunits: alpha, beta, and gamma. The function of proteins C and D is not known.

In Methanococcus voltae, this protein is Methyl-coenzyme M reductase operon protein D (mcrD).